Reading from the N-terminus, the 491-residue chain is 2,3-bisphosphoglycerate-independent phosphoglycerate mutase (491 aa).

Residues D11 and S61 each coordinate Mn(2+). S61 serves as the catalytic Phosphoserine intermediate. Residues H118, 147-148 (RD), R177, R183, 248-251 (RSDR), and K320 each bind substrate. The Mn(2+) site is built by D386, H390, D427, H428, and H445.

Belongs to the BPG-independent phosphoglycerate mutase family. Monomer. The cofactor is Mn(2+).

It carries out the reaction (2R)-2-phosphoglycerate = (2R)-3-phosphoglycerate. The protein operates within carbohydrate degradation; glycolysis; pyruvate from D-glyceraldehyde 3-phosphate: step 3/5. Catalyzes the interconversion of 2-phosphoglycerate and 3-phosphoglycerate. This is 2,3-bisphosphoglycerate-independent phosphoglycerate mutase from Sulfurimonas denitrificans (strain ATCC 33889 / DSM 1251) (Thiomicrospira denitrificans (strain ATCC 33889 / DSM 1251)).